The chain runs to 282 residues: Pantothenate synthetase (282 aa).

30 to 37 (MGYLHEGH) contributes to the ATP binding site. His37 (proton donor) is an active-site residue. Gln61 serves as a coordination point for (R)-pantoate. Beta-alanine is bound at residue Gln61. 147 to 150 (GQKD) is an ATP binding site. (R)-pantoate is bound at residue Gln153. ATP contacts are provided by residues Val176 and 184–187 (LSSR).

This sequence belongs to the pantothenate synthetase family. In terms of assembly, homodimer.

The protein resides in the cytoplasm. The enzyme catalyses (R)-pantoate + beta-alanine + ATP = (R)-pantothenate + AMP + diphosphate + H(+). The protein operates within cofactor biosynthesis; (R)-pantothenate biosynthesis; (R)-pantothenate from (R)-pantoate and beta-alanine: step 1/1. Functionally, catalyzes the condensation of pantoate with beta-alanine in an ATP-dependent reaction via a pantoyl-adenylate intermediate. The sequence is that of Pantothenate synthetase from Desulfitobacterium hafniense (strain DSM 10664 / DCB-2).